The chain runs to 979 residues: Glutamate receptor ionotropic, kainate 5 (979 aa).

The N-terminal stretch at 1–14 (MPAELLLLLIVAFA) is a signal peptide. Topologically, residues 15 to 544 (NPSCQVLSSL…YFSFLDPFSP (530 aa)) are extracellular. 3 cysteine pairs are disulfide-bonded: C36–C292, C83–C334, and C165–C170. 10 N-linked (GlcNAc...) asparagine glycosylation sites follow: N219, N271, N285, N322, N372, N394, N400, N407, N414, and N478. The chain crosses the membrane as a helical span at residues 545-565 (AVWLFMLLAYLAVSCVLFLAA). The Cytoplasmic portion of the chain corresponds to 566–622 (RLSPYEWYNPHPCLRARPHILENQYTLGNSLWFPVGGFMQQGSEIMPRALSTRCVSG). A helical transmembrane segment spans residues 623–643 (VWWAFTLIIISSYTANLAAFL). Topologically, residues 644-803 (TVQRMEVPVE…HRAKGLGMEN (160 aa)) are extracellular. N-linked (GlcNAc...) asparagine glycosylation occurs at N735. A helical membrane pass occupies residues 804–824 (IGGIFVVLICGLIIAVFVAVM). Residues 825-979 (EFIWSTRRSA…TGPRELTEHE (155 aa)) lie on the Cytoplasmic side of the membrane. Residues 856–867 (RKTSRSRRRRRP) are compositionally biased toward basic residues. 3 disordered regions span residues 856–875 (RKTS…RALL), 890–925 (LYSA…APTP), and 942–979 (RASG…TEHE). A compositionally biased stretch (gly residues) spans 894–903 (GAGGDAGAHG). The segment covering 912 to 923 (PGPPGGPRPQAP) has biased composition (pro residues).

Belongs to the glutamate-gated ion channel (TC 1.A.10.1) family. GRIK5 subfamily. As to quaternary structure, homotetramer. Heterotetramer with GRIK2. Can form functional heteromeric receptors with GRIK1, GRIK2 and GRIK3. Forms a heteromeric complex with GRIK2. As to expression, expressed in the hippocampal mossy fiber synapses (at protein level).

It localises to the cell membrane. The protein localises to the postsynaptic cell membrane. It is found in the presynaptic cell membrane. Functionally, ionotropic glutamate receptor that functions as a cation-permeable ligand-gated ion channel, gated by L-glutamate and the glutamatergic agonist kainic acid. Cannot form functional channels on its own and produces channel activity only in heteromeric assembly with GRIK2 subunit. Can form functional heteromeric receptors with GRIK1 and GRIK3. This Mus musculus (Mouse) protein is Glutamate receptor ionotropic, kainate 5 (Grik5).